Here is a 329-residue protein sequence, read N- to C-terminus: MSMSSYPRQRPRRLRSTVAMRRLVAQTSLEPRHLVLPMFVADGIDEPRPITSMPGVVQHTRDSLRRAAAAAVAAGVGGLMLFGVPRDQDKDGVGSAGIDPDGILNVALRDLAKDLGEATVLMADTCLDEFTDHGHCGVLDDRGRVDNDATVARYVELAVAQAESGAHVVGPSGMMDGQVAAIRDGLDAAGYIDVVILAYAAKFASAFYGPFREAVSSSLSGDRRTYQQEPGNAAEALREIELDLDEGADIVMVKPAMGYLDVVAAAADVSPVPVAAYQVSGEYAMIRAAAANNWIDERAAVLESLTGIRRAGADIVLTYWAVDAAGWLT.

Lys-202 functions as the Schiff-base intermediate with substrate in the catalytic mechanism. 5-aminolevulinate-binding residues include Arg-212 and Arg-223. Residue Glu-239 participates in Mg(2+) binding. Catalysis depends on Lys-254, which acts as the Schiff-base intermediate with substrate. Residues Ser-280 and Tyr-319 each coordinate 5-aminolevulinate.

This sequence belongs to the ALAD family. As to quaternary structure, homooctamer.

It carries out the reaction 2 5-aminolevulinate = porphobilinogen + 2 H2O + H(+). It functions in the pathway porphyrin-containing compound metabolism; protoporphyrin-IX biosynthesis; coproporphyrinogen-III from 5-aminolevulinate: step 1/4. Its function is as follows. Catalyzes an early step in the biosynthesis of tetrapyrroles. Binds two molecules of 5-aminolevulinate per subunit, each at a distinct site, and catalyzes their condensation to form porphobilinogen. The chain is Delta-aminolevulinic acid dehydratase (hemB) from Mycobacterium tuberculosis (strain CDC 1551 / Oshkosh).